The sequence spans 318 residues: CRISPR-associated endonuclease Cas1 1 (318 aa).

Mn(2+) contacts are provided by E157, H222, and E237.

This sequence belongs to the CRISPR-associated endonuclease Cas1 family. In terms of assembly, homodimer, forms a heterotetramer with a Cas2 homodimer. Requires Mg(2+) as cofactor. It depends on Mn(2+) as a cofactor.

Functionally, CRISPR (clustered regularly interspaced short palindromic repeat), is an adaptive immune system that provides protection against mobile genetic elements (viruses, transposable elements and conjugative plasmids). CRISPR clusters contain spacers, sequences complementary to antecedent mobile elements, and target invading nucleic acids. CRISPR clusters are transcribed and processed into CRISPR RNA (crRNA). Acts as a dsDNA endonuclease. Involved in the integration of spacer DNA into the CRISPR cassette. The polypeptide is CRISPR-associated endonuclease Cas1 1 (Francisella tularensis subsp. novicida (strain U112)).